An 87-amino-acid chain; its full sequence is Large ribosomal subunit protein bL31B (87 aa).

Belongs to the bacterial ribosomal protein bL31 family. Type B subfamily. In terms of assembly, part of the 50S ribosomal subunit.

The polypeptide is Large ribosomal subunit protein bL31B (Burkholderia pseudomallei (strain 1106a)).